The sequence spans 217 residues: tRNA (guanine-N(7)-)-methyltransferase (217 aa).

S-adenosyl-L-methionine is bound by residues Glu44, Glu69, Asp96, and Asp118. Asp118 is a catalytic residue. Lys122 lines the substrate pocket. The segment at 124–129 is interaction with RNA; sequence RHEKRR. Residues Asp154 and 191–194 contribute to the substrate site; that span reads TEYE.

This sequence belongs to the class I-like SAM-binding methyltransferase superfamily. TrmB family.

It carries out the reaction guanosine(46) in tRNA + S-adenosyl-L-methionine = N(7)-methylguanosine(46) in tRNA + S-adenosyl-L-homocysteine. Its pathway is tRNA modification; N(7)-methylguanine-tRNA biosynthesis. Catalyzes the formation of N(7)-methylguanine at position 46 (m7G46) in tRNA. The polypeptide is tRNA (guanine-N(7)-)-methyltransferase (Bacillus velezensis (strain DSM 23117 / BGSC 10A6 / LMG 26770 / FZB42) (Bacillus amyloliquefaciens subsp. plantarum)).